The primary structure comprises 172 residues: uncharacterized protein (172 aa).

The PfpI endopeptidase domain maps to 3–171 (KKVAIILADE…FNREIVKKLE (169 aa)).

It belongs to the peptidase C56 family.

This is an uncharacterized protein from Staphylococcus epidermidis (strain ATCC 35984 / DSM 28319 / BCRC 17069 / CCUG 31568 / BM 3577 / RP62A).